The primary structure comprises 203 residues: tRNA (pseudouridine(54)-N(1))-methyltransferase (203 aa).

S-adenosyl-L-methionine contacts are provided by Leu-125, Gly-146, and Cys-179.

This sequence belongs to the methyltransferase superfamily. TrmY family. As to quaternary structure, homodimer.

The protein resides in the cytoplasm. The enzyme catalyses pseudouridine(54) in tRNA + S-adenosyl-L-methionine = N(1)-methylpseudouridine(54) in tRNA + S-adenosyl-L-homocysteine + H(+). In terms of biological role, specifically catalyzes the N1-methylation of pseudouridine at position 54 (Psi54) in tRNAs. The sequence is that of tRNA (pseudouridine(54)-N(1))-methyltransferase from Methanopyrus kandleri (strain AV19 / DSM 6324 / JCM 9639 / NBRC 100938).